A 172-amino-acid polypeptide reads, in one-letter code: Protein GrpE (172 aa).

Belongs to the GrpE family. Homodimer.

The protein localises to the cytoplasm. Its function is as follows. Participates actively in the response to hyperosmotic and heat shock by preventing the aggregation of stress-denatured proteins, in association with DnaK and GrpE. It is the nucleotide exchange factor for DnaK and may function as a thermosensor. Unfolded proteins bind initially to DnaJ; upon interaction with the DnaJ-bound protein, DnaK hydrolyzes its bound ATP, resulting in the formation of a stable complex. GrpE releases ADP from DnaK; ATP binding to DnaK triggers the release of the substrate protein, thus completing the reaction cycle. Several rounds of ATP-dependent interactions between DnaJ, DnaK and GrpE are required for fully efficient folding. The chain is Protein GrpE from Thermotoga sp. (strain RQ2).